Here is a 415-residue protein sequence, read N- to C-terminus: Homoserine O-succinyltransferase (415 aa).

The AB hydrolase-1 domain occupies 69-383 (NAVLVCHALN…PHGHDAFLLD (315 aa)). The active-site Nucleophile is the Ser175. Arg245 provides a ligand contact to substrate. Residues Asp344 and His377 contribute to the active site. Asp378 is a binding site for substrate.

It belongs to the AB hydrolase superfamily. MetX family. As to quaternary structure, homodimer.

It localises to the cytoplasm. It carries out the reaction L-homoserine + succinyl-CoA = O-succinyl-L-homoserine + CoA. It participates in amino-acid biosynthesis; L-methionine biosynthesis via de novo pathway; O-succinyl-L-homoserine from L-homoserine: step 1/1. Transfers a succinyl group from succinyl-CoA to L-homoserine, forming succinyl-L-homoserine. The protein is Homoserine O-succinyltransferase of Bordetella pertussis (strain Tohama I / ATCC BAA-589 / NCTC 13251).